A 437-amino-acid chain; its full sequence is Pyrophosphate--fructose 6-phosphate 1-phosphotransferase (437 aa).

Gly27 lines the diphosphate pocket. Asp122 provides a ligand contact to Mg(2+). Substrate is bound by residues 147-149 (TID), 193-195 (MGR), Glu261, and 323-326 (YELR). Asp149 acts as the Proton acceptor in catalysis.

Belongs to the phosphofructokinase type A (PFKA) family. PPi-dependent PFK group II subfamily. Clade 'Short' sub-subfamily. In terms of assembly, homotetramer. The cofactor is Mg(2+). Mn(2+) serves as cofactor.

The protein resides in the cytoplasm. The enzyme catalyses beta-D-fructose 6-phosphate + diphosphate = beta-D-fructose 1,6-bisphosphate + phosphate + H(+). It functions in the pathway carbohydrate degradation; glycolysis; D-glyceraldehyde 3-phosphate and glycerone phosphate from D-glucose: step 3/4. Its activity is regulated as follows. Activated by AMP. Probably promotes oligomerization of the enzyme. Catalyzes the phosphorylation of D-fructose 6-phosphate, the first committing step of glycolysis. Uses inorganic phosphate (PPi) as phosphoryl donor instead of ATP like common ATP-dependent phosphofructokinases (ATP-PFKs), which renders the reaction reversible, and can thus function both in glycolysis and gluconeogenesis. Consistently, PPi-PFK can replace the enzymes of both the forward (ATP-PFK) and reverse (fructose-bisphosphatase (FBPase)) reactions. In Naegleria fowleri (Brain eating amoeba), this protein is Pyrophosphate--fructose 6-phosphate 1-phosphotransferase.